The following is a 354-amino-acid chain: Holliday junction branch migration complex subunit RuvB (354 aa).

The disordered stretch occupies residues 1-38 (MSDFERTEFELPPGVGHSQNEDLNPQQTAGDSDIDTSL). Positions 2 to 199 (SDFERTEFEL…FGFTAQMEFY (198 aa)) are large ATPase domain (RuvB-L). Residues 17 to 30 (HSQNEDLNPQQTAG) show a composition bias toward polar residues. Residues L38, R39, G80, K83, T84, T85, 146–148 (EDF), R189, Y199, and R236 each bind ATP. A Mg(2+)-binding site is contributed by T84. Positions 200–270 (DTADLTRVVT…VARAALLVFD (71 aa)) are small ATPAse domain (RuvB-S). The segment at 273-354 (ESGLDRLDRA…LEPPEGTIGL (82 aa)) is head domain (RuvB-H). The DNA site is built by R328 and R333.

It belongs to the RuvB family. As to quaternary structure, homohexamer. Forms an RuvA(8)-RuvB(12)-Holliday junction (HJ) complex. HJ DNA is sandwiched between 2 RuvA tetramers; dsDNA enters through RuvA and exits via RuvB. An RuvB hexamer assembles on each DNA strand where it exits the tetramer. Each RuvB hexamer is contacted by two RuvA subunits (via domain III) on 2 adjacent RuvB subunits; this complex drives branch migration. In the full resolvosome a probable DNA-RuvA(4)-RuvB(12)-RuvC(2) complex forms which resolves the HJ.

It localises to the cytoplasm. The catalysed reaction is ATP + H2O = ADP + phosphate + H(+). Its function is as follows. The RuvA-RuvB-RuvC complex processes Holliday junction (HJ) DNA during genetic recombination and DNA repair, while the RuvA-RuvB complex plays an important role in the rescue of blocked DNA replication forks via replication fork reversal (RFR). RuvA specifically binds to HJ cruciform DNA, conferring on it an open structure. The RuvB hexamer acts as an ATP-dependent pump, pulling dsDNA into and through the RuvAB complex. RuvB forms 2 homohexamers on either side of HJ DNA bound by 1 or 2 RuvA tetramers; 4 subunits per hexamer contact DNA at a time. Coordinated motions by a converter formed by DNA-disengaged RuvB subunits stimulates ATP hydrolysis and nucleotide exchange. Immobilization of the converter enables RuvB to convert the ATP-contained energy into a lever motion, pulling 2 nucleotides of DNA out of the RuvA tetramer per ATP hydrolyzed, thus driving DNA branch migration. The RuvB motors rotate together with the DNA substrate, which together with the progressing nucleotide cycle form the mechanistic basis for DNA recombination by continuous HJ branch migration. Branch migration allows RuvC to scan DNA until it finds its consensus sequence, where it cleaves and resolves cruciform DNA. In Corynebacterium jeikeium (strain K411), this protein is Holliday junction branch migration complex subunit RuvB.